The chain runs to 367 residues: uncharacterized protein (367 aa).

Residues 1–96 (ITLHRLAELV…LTATLQLQPV (96 aa)) enclose the FAD-binding PCMH-type domain.

It to M.tuberculosis Rv3790.

This is an uncharacterized protein from Streptomyces coelicolor.